We begin with the raw amino-acid sequence, 625 residues long: MAU2 chromatid cohesion factor homolog (625 aa).

TPR repeat units lie at residues 96–129 (FDTA…SQNN), 451–484 (GGFY…ANAE), and 491–524 (SCSL…ASKI). A compositionally biased stretch (polar residues) spans 600–611 (TVPTTETSTSAL). Positions 600 to 625 (TVPTTETSTSALQQPQQPAAQFGQFY) are disordered. Residues 612–625 (QQPQQPAAQFGQFY) show a composition bias toward low complexity.

Belongs to the SCC4/mau-2 family. In terms of assembly, interacts with Nipped-B to form the cohesin loading complex.

It is found in the nucleus. Its subcellular location is the nucleoplasm. Its function is as follows. Required for association of the cohesin complex with chromatin during interphase. Plays a role in sister chromatid cohesion and normal progression through prometaphase. The chain is MAU2 chromatid cohesion factor homolog from Drosophila mojavensis (Fruit fly).